Consider the following 381-residue polypeptide: Protein pelota homolog (381 aa).

The protein belongs to the eukaryotic release factor 1 family. Pelota subfamily. In terms of assembly, component of the Pelota-HBS1L complex, also named Dom34-Hbs1 complex, composed of pelo-1 and hbs-1. A divalent metal cation serves as cofactor.

The protein resides in the cytoplasm. It is found in the nucleus. Component of the Pelota-HBS1L complex, a complex that recognizes stalled ribosomes and triggers the No-Go Decay (NGD) pathway. In the Pelota-HBS1L complex, pelo-1 recognizes ribosomes stalled at the 3' end of an mRNA and engages stalled ribosomes by destabilizing mRNA in the mRNA channel. Following ribosome-binding, the Pelota-HBS1L complex promotes the disassembly of stalled ribosomes, followed by degradation of damaged mRNAs as part of the NGD pathway. The protein is Protein pelota homolog of Caenorhabditis elegans.